The chain runs to 106 residues: L-rhamnose mutarotase (106 aa).

Tyrosine 20 contacts substrate. Catalysis depends on histidine 24, which acts as the Proton donor. Residues tyrosine 43 and 78–79 each bind substrate; that span reads WW.

It belongs to the rhamnose mutarotase family. As to quaternary structure, homodimer.

The protein localises to the cytoplasm. The catalysed reaction is alpha-L-rhamnose = beta-L-rhamnose. It participates in carbohydrate metabolism; L-rhamnose metabolism. Involved in the anomeric conversion of L-rhamnose. The sequence is that of L-rhamnose mutarotase from Rhizobium johnstonii (strain DSM 114642 / LMG 32736 / 3841) (Rhizobium leguminosarum bv. viciae).